A 95-amino-acid polypeptide reads, in one-letter code: Large ribosomal subunit protein uL23 (95 aa).

Belongs to the universal ribosomal protein uL23 family. In terms of assembly, part of the 50S ribosomal subunit. Contacts protein L29 and trigger factor when it is bound to the ribosome.

Functionally, one of the early assembly protein it binds 23S rRNA. One of the proteins that surrounds the polypeptide exit tunnel on the outside of the subunit. Forms the main docking site for trigger factor binding to the ribosome. In Deinococcus radiodurans (strain ATCC 13939 / DSM 20539 / JCM 16871 / CCUG 27074 / LMG 4051 / NBRC 15346 / NCIMB 9279 / VKM B-1422 / R1), this protein is Large ribosomal subunit protein uL23.